Here is a 208-residue protein sequence, read N- to C-terminus: 3-demethoxyubiquinol 3-hydroxylase (208 aa).

Fe cation is bound by residues glutamate 57, glutamate 87, histidine 90, glutamate 139, glutamate 171, and histidine 174.

This sequence belongs to the COQ7 family. Fe cation is required as a cofactor.

It localises to the cell membrane. It catalyses the reaction a 5-methoxy-2-methyl-3-(all-trans-polyprenyl)benzene-1,4-diol + AH2 + O2 = a 3-demethylubiquinol + A + H2O. It participates in cofactor biosynthesis; ubiquinone biosynthesis. Catalyzes the hydroxylation of 2-nonaprenyl-3-methyl-6-methoxy-1,4-benzoquinol during ubiquinone biosynthesis. The protein is 3-demethoxyubiquinol 3-hydroxylase of Burkholderia cenocepacia (strain ATCC BAA-245 / DSM 16553 / LMG 16656 / NCTC 13227 / J2315 / CF5610) (Burkholderia cepacia (strain J2315)).